Consider the following 203-residue polypeptide: Glycerol-3-phosphate acyltransferase (203 aa).

The Periplasmic portion of the chain corresponds to 1–3 (MSA). A helical membrane pass occupies residues 4–24 (IAPGMILFAYLCGSISSAILV). At 25–52 (CRIAGLPDPRESGSGNPGATNVLRIGGK) the chain is on the cytoplasmic side. A helical membrane pass occupies residues 53–73 (GAAVAVLIFDILKGMLPVWGA). Topologically, residues 74-80 (YALGVTP) are periplasmic. The chain crosses the membrane as a helical span at residues 81-101 (FWLGLIAIAACLGHIWPVFFG). Residues 102 to 111 (FKGGKGVATA) are Cytoplasmic-facing. Residues 112–132 (FGAIAPIGWDLTGVMAGTWLL) traverse the membrane as a helical segment. The Periplasmic segment spans residues 133-137 (TVLLS). Residues 138–158 (GYSSLGAIVSALIAPFYVWWF) traverse the membrane as a helical segment. Residues 159-203 (KPQFTFPVSMLSCLILLRHHDNIQRLWRRQETKIWTKLKKKRQKD) lie on the Cytoplasmic side of the membrane.

It belongs to the PlsY family. Probably interacts with PlsX.

It localises to the cell inner membrane. The catalysed reaction is sn-glycerol 3-phosphate + an acyl-CoA = a 1-acyl-sn-glycero-3-phosphate + CoA. The enzyme catalyses a fatty acyl-[ACP] + sn-glycerol 3-phosphate = a 1-acyl-sn-glycero-3-phosphate + holo-[ACP]. The protein operates within lipid metabolism; phospholipid metabolism. In terms of biological role, catalyzes the transfer of an acyl group from acyl-ACP to glycerol-3-phosphate (G3P) to form lysophosphatidic acid (LPA). This enzyme can also utilize acyl-CoA as fatty acyl donor, but not acyl-PO(4). The polypeptide is Glycerol-3-phosphate acyltransferase (Salmonella agona (strain SL483)).